The primary structure comprises 706 residues: Glycine--tRNA ligase beta subunit (706 aa).

Belongs to the class-II aminoacyl-tRNA synthetase family. Tetramer of two alpha and two beta subunits.

Its subcellular location is the cytoplasm. The enzyme catalyses tRNA(Gly) + glycine + ATP = glycyl-tRNA(Gly) + AMP + diphosphate. This Acidobacterium capsulatum (strain ATCC 51196 / DSM 11244 / BCRC 80197 / JCM 7670 / NBRC 15755 / NCIMB 13165 / 161) protein is Glycine--tRNA ligase beta subunit.